Here is a 256-residue protein sequence, read N- to C-terminus: Type II phosphatidylinositol 4,5-bisphosphate 4-phosphatase (256 aa).

The segment covering 1-10 has biased composition (basic and acidic residues); the sequence is MAADGIDERS. The tract at residues 1 to 25 is disordered; the sequence is MAADGIDERSPLISPSSGNVTPTAP. The segment covering 13-22 has biased composition (polar residues); that stretch reads ISPSSGNVTP. Cys106 is an active-site residue. The CX5R motif motif lies at 106–112; that stretch reads CKDISRR. 2 helical membrane passes run 191–211 and 226–246; these read CCTYITMGMICIFIGVGLTVG and WAVAYLVGLVCLVRACYWGAI.

The protein resides in the late endosome membrane. The protein localises to the lysosome membrane. It carries out the reaction a 1,2-diacyl-sn-glycero-3-phospho-(1D-myo-inositol-4,5-bisphosphate) + H2O = a 1,2-diacyl-sn-glycero-3-phospho-(1D-myo-inositol-5-phosphate) + phosphate. Its function is as follows. Catalyzes the hydrolysis of phosphatidylinositol-4,5-bisphosphate (PtdIns-4,5-P2) to phosphatidylinositol-4-phosphate (PtdIns-4-P). The polypeptide is Type II phosphatidylinositol 4,5-bisphosphate 4-phosphatase (Xenopus laevis (African clawed frog)).